A 167-amino-acid polypeptide reads, in one-letter code: Probable membrane-bound hydrogenase subunit mbhJ (167 aa).

4 residues coordinate [4Fe-4S] cluster: C35, C38, C102, and C132.

The protein belongs to the complex I 20 kDa subunit family. The membrane-bound hydrogenase complex is composed of MbhK and MbhL, but may also contain MbhJ. [4Fe-4S] cluster serves as cofactor.

The protein localises to the cell membrane. It catalyses the reaction H2 + 2 oxidized [2Fe-2S]-[ferredoxin] = 2 reduced [2Fe-2S]-[ferredoxin] + 2 H(+). With respect to regulation, inhibited by 0.1 mM Cu(2+). Functionally, probable subunit of a hydrogen-evolving hydrogenase that utilizes protons both as a substrate for hydrogen production and proton translocation. Acts by coupling the redox reaction via ferredoxin and iron-sulfur (Fe-S) clusters to proton translocation across the membrane, thereby conserving the redox energy in a proton gradient. The sequence is that of Probable membrane-bound hydrogenase subunit mbhJ from Pyrococcus furiosus (strain ATCC 43587 / DSM 3638 / JCM 8422 / Vc1).